The following is a 479-amino-acid chain: Glutamyl-tRNA(Gln) amidotransferase subunit A (479 aa).

Residues Lys74 and Ser149 each act as charge relay system in the active site. Ser173 (acyl-ester intermediate) is an active-site residue.

Belongs to the amidase family. GatA subfamily. Heterotrimer of A, B and C subunits.

It catalyses the reaction L-glutamyl-tRNA(Gln) + L-glutamine + ATP + H2O = L-glutaminyl-tRNA(Gln) + L-glutamate + ADP + phosphate + H(+). Allows the formation of correctly charged Gln-tRNA(Gln) through the transamidation of misacylated Glu-tRNA(Gln) in organisms which lack glutaminyl-tRNA synthetase. The reaction takes place in the presence of glutamine and ATP through an activated gamma-phospho-Glu-tRNA(Gln). This is Glutamyl-tRNA(Gln) amidotransferase subunit A from Cenarchaeum symbiosum (strain A).